A 115-amino-acid polypeptide reads, in one-letter code: Large ribosomal subunit protein P2 (115 aa).

At methionine 1 the chain carries N-acetylmethionine. Phosphoserine is present on residues serine 17 and serine 19. N6-acetyllysine; alternate is present on lysine 21. Lysine 21 carries the post-translational modification N6-succinyllysine; alternate. Residues 69–90 (GAXAVAAAPGSXAPAAGSAPAA) show a composition bias toward low complexity. The tract at residues 69-115 (GAXAVAAAPGSXAPAAGSAPAAAEEKKEEKKEESEESDDDMGFGLFD) is disordered. Phosphoserine is present on residues serine 79 and serine 86. A compositionally biased stretch (basic and acidic residues) spans 91 to 101 (AEEKKEEKKEE). Serine 102 and serine 105 each carry phosphoserine.

This sequence belongs to the eukaryotic ribosomal protein P1/P2 family. As to quaternary structure, heterodimer with RPLP1 at the lateral ribosomal stalk of the large ribosomal subunit.

Its function is as follows. Plays an important role in the elongation step of protein synthesis. This Sus scrofa (Pig) protein is Large ribosomal subunit protein P2 (RPLP2).